The primary structure comprises 208 residues: Small ribosomal subunit protein uS4 (208 aa).

Positions 98–161 (RRLDNVIYRL…RKMPVIAEAQ (64 aa)) constitute an S4 RNA-binding domain.

It belongs to the universal ribosomal protein uS4 family. In terms of assembly, part of the 30S ribosomal subunit. Contacts protein S5. The interaction surface between S4 and S5 is involved in control of translational fidelity.

One of the primary rRNA binding proteins, it binds directly to 16S rRNA where it nucleates assembly of the body of the 30S subunit. Its function is as follows. With S5 and S12 plays an important role in translational accuracy. This Oleidesulfovibrio alaskensis (strain ATCC BAA-1058 / DSM 17464 / G20) (Desulfovibrio alaskensis) protein is Small ribosomal subunit protein uS4.